Here is a 932-residue protein sequence, read N- to C-terminus: Protocadherin gamma-A8 (932 aa).

A signal peptide spans Met-1–Gly-29. Cadherin domains are found at residues Gln-30–Phe-133, Gln-134–Phe-242, Pro-243–Val-347, Ile-348–Phe-452, Pro-453–Ile-562, and Asp-570–Val-682. At Gln-30–Tyr-692 the chain is on the extracellular side. The N-linked (GlcNAc...) asparagine glycan is linked to Asn-47. 3 N-linked (GlcNAc...) asparagine glycosylation sites follow: Asn-414, Asn-419, and Asn-545. Residue Asn-685 is glycosylated (N-linked (GlcNAc...) asparagine). Residues Leu-693–Gly-713 traverse the membrane as a helical segment. The Cytoplasmic portion of the chain corresponds to Leu-714–Lys-932. Disordered regions lie at residues Ala-804–Asn-841 and Ala-902–Lys-932. Residues Ala-810 to Asn-841 show a composition bias toward polar residues. Residues Asn-922–Lys-932 show a composition bias toward basic residues.

It is found in the cell membrane. Its function is as follows. Potential calcium-dependent cell-adhesion protein. May be involved in the establishment and maintenance of specific neuronal connections in the brain. The protein is Protocadherin gamma-A8 (PCDHGA8) of Homo sapiens (Human).